A 314-amino-acid polypeptide reads, in one-letter code: Polyadenylate-binding protein-interacting protein 8 (314 aa).

The tract at residues 1–47 (MAAITEMATDSNDVINDGGTGDGIEKSTDSKPEIESDDLKPKSKPEY) is disordered. The segment covering 23–47 (GIEKSTDSKPEIESDDLKPKSKPEY) has biased composition (basic and acidic residues). The short motif at 59-69 (KLNPEAKEFFP) is the PAM2-like element. A Bipartite nuclear localization signal motif is present at residues 99–112 (RRRRNNYNQGRRVR). RRM domains lie at 128–203 (RTVY…PSKT) and 225–301 (RTIY…PSKT).

As to quaternary structure, interacts with MPC. In terms of tissue distribution, expressed in cauline leaves, stems, rosette leaves, immature siliques and primary inflorescences but at a low level.

It is found in the nucleus. In Arabidopsis thaliana (Mouse-ear cress), this protein is Polyadenylate-binding protein-interacting protein 8 (CID8).